Consider the following 338-residue polypeptide: UDP-N-acetylenolpyruvoylglucosamine reductase (338 aa).

One can recognise an FAD-binding PCMH-type domain in the interval 17–188; sequence IAARTDWWID…MYVDYRLRLR (172 aa). Residue Arg164 is part of the active site. The active-site Proton donor is the Ser237. The active site involves Glu333.

The protein belongs to the MurB family. FAD is required as a cofactor.

It localises to the cytoplasm. It catalyses the reaction UDP-N-acetyl-alpha-D-muramate + NADP(+) = UDP-N-acetyl-3-O-(1-carboxyvinyl)-alpha-D-glucosamine + NADPH + H(+). It participates in cell wall biogenesis; peptidoglycan biosynthesis. Functionally, cell wall formation. The protein is UDP-N-acetylenolpyruvoylglucosamine reductase of Porphyromonas gingivalis (strain ATCC 33277 / DSM 20709 / CIP 103683 / JCM 12257 / NCTC 11834 / 2561).